The sequence spans 670 residues: Proline-rich receptor-like protein kinase PERK5 (670 aa).

A disordered region spans residues 1–181; it reads MADSPVDSSP…SGDSDSSSGN (181 aa). Residues 1–186 are Extracellular-facing; the sequence is MADSPVDSSP…SSSGNHPQAN (186 aa). Residues 14–31 show a composition bias toward low complexity; that stretch reads TSNGTPPSNGTSPSNESS. Residues Asn-22 and Asn-28 are each glycosylated (N-linked (GlcNAc...) asparagine). 2 stretches are compositionally biased toward pro residues: residues 32–62 and 84–109; these read PPTP…PAPP and PQTP…PPQT. N-linked (GlcNAc...) asparagine glycosylation occurs at Asn-130. Over residues 132–141 the composition is skewed to low complexity; that stretch reads TNGGNNNRDG. N-linked (GlcNAc...) asparagine glycosylation is present at Asn-151. Over residues 167–181 the composition is skewed to low complexity; that stretch reads SPPQNSGDSDSSSGN. A helical transmembrane segment spans residues 187–207; the sequence is IGLIIGVLVGAGLLLLLAVCI. At 208–670 the chain is on the cytoplasmic side; the sequence is CICCNRKKKK…RGSMKRNPQL (463 aa). At Thr-301 the chain carries Phosphothreonine. In terms of domain architecture, Protein kinase spans 312–590; the sequence is FAQSNLLGQG…VRALEGDMSM (279 aa). ATP-binding positions include 318–326 and Lys-340; that span reads LGQGGFGYV. Position 385 is a phosphotyrosine (Tyr-385). Asp-436 acts as the Proton acceptor in catalysis. Position 469 is a phosphoserine (Ser-469). A phosphothreonine mark is found at Thr-470 and Thr-475. At Tyr-483 the chain carries Phosphotyrosine. 2 disordered regions span residues 589-613 and 635-670; these read SMDD…VSSE and EYQS…NPQL. Polar residues predominate over residues 599–613; it reads PGQSTYLSPGSVSSE.

Belongs to the protein kinase superfamily. Ser/Thr protein kinase family. Mostly expressed in flower buds.

It is found in the cell membrane. It catalyses the reaction L-seryl-[protein] + ATP = O-phospho-L-seryl-[protein] + ADP + H(+). It carries out the reaction L-threonyl-[protein] + ATP = O-phospho-L-threonyl-[protein] + ADP + H(+). The protein is Proline-rich receptor-like protein kinase PERK5 (PERK5) of Arabidopsis thaliana (Mouse-ear cress).